Here is a 160-residue protein sequence, read N- to C-terminus: Dihydrofolate reductase (160 aa).

In terms of domain architecture, DHFR spans 1 to 160 (MLIAIWAMTQ…NVNYYRKKQQ (160 aa)). Substrate is bound at residue 5-7 (IWA). NADP(+) contacts are provided by residues 6–7 (WA) and 14–19 (IGNNNT). E27 provides a ligand contact to substrate. 43–46 (GRKT) provides a ligand contact to NADP(+). A substrate-binding site is contributed by R57. NADP(+) contacts are provided by residues 62 to 65 (LSKD) and 101 to 106 (CGGKSV). Position 120 (S120) interacts with substrate.

The protein belongs to the dihydrofolate reductase family.

The enzyme catalyses (6S)-5,6,7,8-tetrahydrofolate + NADP(+) = 7,8-dihydrofolate + NADPH + H(+). The protein operates within cofactor biosynthesis; tetrahydrofolate biosynthesis; 5,6,7,8-tetrahydrofolate from 7,8-dihydrofolate: step 1/1. Functionally, key enzyme in folate metabolism. Catalyzes an essential reaction for de novo glycine and purine synthesis, and for DNA precursor synthesis. The protein is Dihydrofolate reductase (folA) of Mycoplasma genitalium (strain ATCC 33530 / DSM 19775 / NCTC 10195 / G37) (Mycoplasmoides genitalium).